We begin with the raw amino-acid sequence, 213 residues long: Redox-sensing transcriptional repressor Rex (213 aa).

A DNA-binding region (H-T-H motif) is located at residues 17 to 56 (LYYRIFKRFHSENIEKASSKQIAEAIGIDSATVRRDFSYF). 91 to 96 (GVGNIG) contributes to the NAD(+) binding site.

This sequence belongs to the transcriptional regulatory Rex family. As to quaternary structure, homodimer.

The protein localises to the cytoplasm. Its function is as follows. Modulates transcription in response to changes in cellular NADH/NAD(+) redox state. This chain is Redox-sensing transcriptional repressor Rex, found in Streptococcus mutans serotype c (strain ATCC 700610 / UA159).